A 1117-amino-acid polypeptide reads, in one-letter code: Lid2 complex component snt2 (1117 aa).

Residues 89–208 (ELIQPNDFVL…QNINKVFDVV (120 aa)) enclose the BAH domain. Residues 227–282 (NYDFIVTEYGKGRALLNEPSNCKVCKKWCAFDFSVQCADCKKYYHMDCVVPPLLKK) form a Phorbol-ester/DAG-type zinc finger. The PHD-type 1 zinc-finger motif lies at 245–297 (PSNCKVCKKWCAFDFSVQCADCKKYYHMDCVVPPLLKKPPHGFGWTCATCSFA). Positions 361-380 (SSRNLHQQSRKSLDENKPNS) are disordered. Residues 798–882 (KKCCALCGIV…SWACLSCRSN (85 aa)) form a PHD-type 2 zinc finger. The C2HC pre-PHD-type zinc-finger motif lies at 890 to 925 (DNHCVLCLQSASHSLMKKTVEGNWVHLICASWTPDV). The segment at 948-1002 (KKCEVCGNSFGVCVSSPNSGLTSHVTCAEKANWYLGFEFVKQDQSPFSMLSNLKS) adopts a PHD-type 3; degenerate zinc-finger fold.

Component of the Lid2 complex composed of ash2, jmj3, lid2, sdc1 and snt2.

The protein localises to the nucleus. This Schizosaccharomyces pombe (strain 972 / ATCC 24843) (Fission yeast) protein is Lid2 complex component snt2 (snt2).